The primary structure comprises 810 residues: Cation/H(+) antiporter 18 (810 aa).

The next 12 helical transmembrane spans lie at 29-49, 59-76, 91-111, 126-146, 157-177, 193-213, 223-243, 277-297, 314-334, 343-363, 374-394, and 406-426; these read FALP…RVLA, RVIA…SLLG, LTVL…LAGL, LGIA…SSFV, STAF…PVLA, LAMS…ALAI, LVSL…SFII, FITD…GVLI, LVSG…TNVA, GLLV…TLGV, AITL…VLNI, and FAIM…VVMA. Phosphoserine is present on Ser804.

Belongs to the monovalent cation:proton antiporter 2 (CPA2) transporter (TC 2.A.37) family. CHX (TC 2.A.37.4) subfamily. As to expression, expressed in roots.

It localises to the membrane. Functionally, may operate as a cation/H(+) antiporter. The chain is Cation/H(+) antiporter 18 (CHX18) from Arabidopsis thaliana (Mouse-ear cress).